The primary structure comprises 1413 residues: DNA-directed RNA polymerase subunit beta' (1413 aa).

The Zn(2+) site is built by Cys-70, Cys-72, Cys-85, and Cys-88. The Mg(2+) site is built by Asp-460, Asp-462, and Asp-464. The Zn(2+) site is built by Cys-819, Cys-893, Cys-900, and Cys-903. Residues 1392–1413 form a disordered region; that stretch reads EEAFDFGTPSAPAEEPQHPAAE.

It belongs to the RNA polymerase beta' chain family. As to quaternary structure, the RNAP catalytic core consists of 2 alpha, 1 beta, 1 beta' and 1 omega subunit. When a sigma factor is associated with the core the holoenzyme is formed, which can initiate transcription. It depends on Mg(2+) as a cofactor. Requires Zn(2+) as cofactor.

It catalyses the reaction RNA(n) + a ribonucleoside 5'-triphosphate = RNA(n+1) + diphosphate. DNA-dependent RNA polymerase catalyzes the transcription of DNA into RNA using the four ribonucleoside triphosphates as substrates. In Burkholderia orbicola (strain MC0-3), this protein is DNA-directed RNA polymerase subunit beta'.